Consider the following 66-residue polypeptide: Probable Sec-independent protein translocase protein TatE (66 aa).

The helical transmembrane segment at 1 to 21 threads the bilayer; sequence MEGISITKLLVIAVLIVLLFG. The segment at 46-66 is disordered; that stretch reads ETPAAKKSDGVEAAPRVENKE.

It belongs to the TatA/E family. TatE subfamily.

The protein localises to the cell inner membrane. In terms of biological role, part of the twin-arginine translocation (Tat) system that transports large folded proteins containing a characteristic twin-arginine motif in their signal peptide across membranes. TatE shares overlapping functions with TatA. The chain is Probable Sec-independent protein translocase protein TatE from Edwardsiella ictaluri (strain 93-146).